A 173-amino-acid polypeptide reads, in one-letter code: Crossover junction endodeoxyribonuclease RuvC (173 aa).

Catalysis depends on residues Asp-8, Glu-67, and Asp-139. Mg(2+)-binding residues include Asp-8, Glu-67, and Asp-139.

The protein belongs to the RuvC family. Homodimer which binds Holliday junction (HJ) DNA. The HJ becomes 2-fold symmetrical on binding to RuvC with unstacked arms; it has a different conformation from HJ DNA in complex with RuvA. In the full resolvosome a probable DNA-RuvA(4)-RuvB(12)-RuvC(2) complex forms which resolves the HJ. It depends on Mg(2+) as a cofactor.

The protein localises to the cytoplasm. It catalyses the reaction Endonucleolytic cleavage at a junction such as a reciprocal single-stranded crossover between two homologous DNA duplexes (Holliday junction).. Functionally, the RuvA-RuvB-RuvC complex processes Holliday junction (HJ) DNA during genetic recombination and DNA repair. Endonuclease that resolves HJ intermediates. Cleaves cruciform DNA by making single-stranded nicks across the HJ at symmetrical positions within the homologous arms, yielding a 5'-phosphate and a 3'-hydroxyl group; requires a central core of homology in the junction. The consensus cleavage sequence is 5'-(A/T)TT(C/G)-3'. Cleavage occurs on the 3'-side of the TT dinucleotide at the point of strand exchange. HJ branch migration catalyzed by RuvA-RuvB allows RuvC to scan DNA until it finds its consensus sequence, where it cleaves and resolves the cruciform DNA. This Shewanella piezotolerans (strain WP3 / JCM 13877) protein is Crossover junction endodeoxyribonuclease RuvC.